A 432-amino-acid chain; its full sequence is Homogentisate 1,2-dioxygenase (432 aa).

Histidine 286 functions as the Proton acceptor in the catalytic mechanism. 2 residues coordinate Fe cation: histidine 329 and glutamate 335. Positions 344 and 365 each coordinate homogentisate. Histidine 365 is a binding site for Fe cation.

The protein belongs to the homogentisate dioxygenase family. Hexamer; dimer of trimers. The cofactor is Fe cation.

It carries out the reaction homogentisate + O2 = 4-maleylacetoacetate + H(+). It functions in the pathway amino-acid degradation; L-phenylalanine degradation; acetoacetate and fumarate from L-phenylalanine: step 4/6. Its function is as follows. Involved in the catabolism of homogentisate (2,5-dihydroxyphenylacetate or 2,5-OH-PhAc), a central intermediate in the degradation of phenylalanine and tyrosine. Catalyzes the oxidative ring cleavage of the aromatic ring of homogentisate to yield maleylacetoacetate. This Bordetella petrii (strain ATCC BAA-461 / DSM 12804 / CCUG 43448) protein is Homogentisate 1,2-dioxygenase.